The sequence spans 121 residues: B-box domain protein 31 (121 aa).

The segment at Ser-26–Leu-72 adopts a B box-type; atypical zinc-finger fold. The PFVFL motif lies at Pro-117 to Leu-121.

As to expression, highly expressed in shoot apical meristems and in vascular tissues of leaves. Also detected in petioles.

Developmental regulator acting by forming heterodimeric complexes, that sequester CO and CO-like (COL) proteins into non-functional complexes. Involved in the CO-mediated long-day flowering-promotion pathway. Engages CO and the transcriptional repressor TPL in a tripartite complex. This is B-box domain protein 31 from Arabidopsis thaliana (Mouse-ear cress).